The chain runs to 356 residues: tRNA-specific 2-thiouridylase MnmA (356 aa).

Position 6–13 (6–13 (AVSGGTDS)) interacts with ATP. C95 (nucleophile) is an active-site residue. C95 and C195 form a disulfide bridge. Residue G119 participates in ATP binding. Residues 145–147 (KDQ) are interaction with tRNA. Catalysis depends on C195, which acts as the Cysteine persulfide intermediate. Residues 300–301 (RY) are interaction with tRNA.

Belongs to the MnmA/TRMU family.

The protein localises to the cytoplasm. The catalysed reaction is S-sulfanyl-L-cysteinyl-[protein] + uridine(34) in tRNA + AH2 + ATP = 2-thiouridine(34) in tRNA + L-cysteinyl-[protein] + A + AMP + diphosphate + H(+). In terms of biological role, catalyzes the 2-thiolation of uridine at the wobble position (U34) of tRNA, leading to the formation of s(2)U34. The sequence is that of tRNA-specific 2-thiouridylase MnmA from Oleidesulfovibrio alaskensis (strain ATCC BAA-1058 / DSM 17464 / G20) (Desulfovibrio alaskensis).